We begin with the raw amino-acid sequence, 573 residues long: DNA ligase (573 aa).

E250 is an ATP binding site. K252 (N6-AMP-lysine intermediate) is an active-site residue. ATP-binding residues include R257, R272, E301, F342, R432, and K438.

This sequence belongs to the ATP-dependent DNA ligase family. The cofactor is Mg(2+).

The catalysed reaction is ATP + (deoxyribonucleotide)n-3'-hydroxyl + 5'-phospho-(deoxyribonucleotide)m = (deoxyribonucleotide)n+m + AMP + diphosphate.. In terms of biological role, DNA ligase that seals nicks in double-stranded DNA during DNA replication, DNA recombination and DNA repair. The polypeptide is DNA ligase (Methanococcus maripaludis (strain C7 / ATCC BAA-1331)).